The primary structure comprises 320 residues: Cytochrome f (320 aa).

The N-terminal stretch at 1 to 35 is a signal peptide; that stretch reads MQNRNTFSWVKEQMTRFISVSIMIYVITRTSISNA. Heme is bound by residues tyrosine 36, cysteine 56, cysteine 59, and histidine 60. Residues 286–306 form a helical membrane-spanning segment; sequence VQGLLFFLASVILAQIFLVLK.

The protein belongs to the cytochrome f family. The 4 large subunits of the cytochrome b6-f complex are cytochrome b6, subunit IV (17 kDa polypeptide, petD), cytochrome f and the Rieske protein, while the 4 small subunits are PetG, PetL, PetM and PetN. The complex functions as a dimer. Heme is required as a cofactor.

It is found in the plastid. The protein resides in the chloroplast thylakoid membrane. Component of the cytochrome b6-f complex, which mediates electron transfer between photosystem II (PSII) and photosystem I (PSI), cyclic electron flow around PSI, and state transitions. The protein is Cytochrome f of Drimys granadensis.